The chain runs to 315 residues: Tyrosine recombinase XerC (315 aa).

The region spanning 1–103 (MITSFYAFLD…AIKSFARFCV (103 aa)) is the Core-binding (CB) domain. Residues 124-306 (ELPSPLTYEQ…SMKLKKQIHD (183 aa)) enclose the Tyr recombinase domain. Catalysis depends on residues R164, K188, H258, R261, and H284. The active-site O-(3'-phospho-DNA)-tyrosine intermediate is Y293.

This sequence belongs to the 'phage' integrase family. XerC subfamily. As to quaternary structure, forms a cyclic heterotetrameric complex composed of two molecules of XerC and two molecules of XerD.

It localises to the cytoplasm. In terms of biological role, site-specific tyrosine recombinase, which acts by catalyzing the cutting and rejoining of the recombining DNA molecules. The XerC-XerD complex is essential to convert dimers of the bacterial chromosome into monomers to permit their segregation at cell division. It also contributes to the segregational stability of plasmids. This chain is Tyrosine recombinase XerC, found in Chlamydia trachomatis serovar L2b (strain UCH-1/proctitis).